The primary structure comprises 360 residues: MMDPLDNGLFDLPDYEHTEDENFPPLPPPHSPGADDEAEDVANGDDWTENAGQTQREEAPKPARRVVKRPQPKLDGQRLASQRGLPALRHMFDDVKFKGKGHETEDLKILLRQMENWAHRLFPKLQFEDFLNRLESMGNKKEVQTCLKKIRMDLPIVHDDFLSEEVVVQTEDHAIDMPSEDFSFPDELHVPSPSQPVKVDLSEETLQRIERNRRLALERRMEKMQAQAESQALSQATQSDPNEIPDDAFDAEMLDAVESMTGIPTASQSPPHVDKDLSLVLHSHDLPVQDVSQSPAPCPKPQGDAPPEKALSLVHSALPSTSDPTSPRKPLTEQLPDDADTSSATPYTEAPACTNTKEEY.

4 disordered regions span residues 1-80 (MMDP…QRLA), 178-199 (PSEDFSFPDELHVPSPSQPVKV), 220-246 (RMEKMQAQAESQALSQATQSDPNEIPD), and 289-360 (QDVS…KEEY). Acidic residues predominate over residues 34–48 (ADDEAEDVANGDDWT). Over residues 62 to 71 (PARRVVKRPQ) the composition is skewed to basic residues. An interaction with TIMELESS region spans residues 74–150 (LDGQRLASQR…KEVQTCLKKI (77 aa)). The segment covering 225-239 (QAQAESQALSQATQS) has biased composition (low complexity).

It belongs to the CSM3 family. As to quaternary structure, interacts with timeless, which impairs timeless self-association.

It is found in the cytoplasm. It localises to the nucleus. Functionally, plays an important role in the control of DNA replication and the maintenance of replication fork stability. Important for cell survival after DNA damage or replication stress. May be required for the replication checkpoint induced by hydroxyurea or ultraviolet light. In Xenopus laevis (African clawed frog), this protein is TIMELESS-interacting protein (tipin).